The primary structure comprises 146 residues: Snaclec mucetin subunit beta (146 aa).

A signal peptide spans 1–23 (MGRFIFVSFGLLVVFISLSGTEA). Cystine bridges form between cysteine 27-cysteine 38, cysteine 55-cysteine 144, and cysteine 121-cysteine 136. One can recognise a C-type lectin domain in the interval 34–145 (YDEHCYQVFQ…CSSKRYVVCK (112 aa)).

Belongs to the snaclec family. Dimer and tetramer of heterodimers of alpha and beta subunits ((alphabeta)(2) and (alphabeta)(4)); disulfide-linked. These two multimeric forms are found. In terms of processing, the complex is glycosylated. In terms of tissue distribution, expressed by the venom gland.

The protein localises to the secreted. In terms of biological role, potent platelet activator that acts via GPIb (GP1BA/GP1BB). After activation by the toxin, the receptor is redistributed on platelet surface thanks to cytoskeletal translocation. The indirect activation of integrin alpha-IIb/beta-3 (ITGA2B/ITGB3) also induced by the toxin is downstream the cytoskeletal translocation of GPIb. This Protobothrops mucrosquamatus (Taiwan habu) protein is Snaclec mucetin subunit beta.